A 281-amino-acid polypeptide reads, in one-letter code: Tryptophan 2,3-dioxygenase (281 aa).

Substrate is bound by residues 50 to 54, Y112, and R116; that span reads FIIQH. H239 contacts heme. T253 serves as a coordination point for substrate.

Belongs to the tryptophan 2,3-dioxygenase family. In terms of assembly, homotetramer. Heme is required as a cofactor.

The enzyme catalyses L-tryptophan + O2 = N-formyl-L-kynurenine. It participates in amino-acid degradation; L-tryptophan degradation via kynurenine pathway; L-kynurenine from L-tryptophan: step 1/2. Its function is as follows. Heme-dependent dioxygenase that catalyzes the oxidative cleavage of the L-tryptophan (L-Trp) pyrrole ring and converts L-tryptophan to N-formyl-L-kynurenine. Catalyzes the oxidative cleavage of the indole moiety. In Saccharopolyspora erythraea (strain ATCC 11635 / DSM 40517 / JCM 4748 / NBRC 13426 / NCIMB 8594 / NRRL 2338), this protein is Tryptophan 2,3-dioxygenase.